Here is a 338-residue protein sequence, read N- to C-terminus: Probable 1-aminocyclopropane-1-carboxylate deaminase (338 aa).

K51 carries the N6-(pyridoxal phosphate)lysine modification. Residue S78 is the Nucleophile of the active site.

This sequence belongs to the ACC deaminase/D-cysteine desulfhydrase family. Pyridoxal 5'-phosphate is required as a cofactor.

The catalysed reaction is 1-aminocyclopropane-1-carboxylate + H2O = 2-oxobutanoate + NH4(+). In terms of biological role, catalyzes a cyclopropane ring-opening reaction, the irreversible conversion of 1-aminocyclopropane-1-carboxylate (ACC) to ammonia and alpha-ketobutyrate. In Schizosaccharomyces pombe (strain 972 / ATCC 24843) (Fission yeast), this protein is Probable 1-aminocyclopropane-1-carboxylate deaminase.